The following is a 599-amino-acid chain: Sulfite reductase [NADPH] flavoprotein alpha-component (599 aa).

Positions 64–202 (ITIISASQTG…AASEWRARVV (139 aa)) constitute a Flavodoxin-like domain. FMN-binding positions include 70–75 (SQTGNA), 117–120 (STQG), and 153–162 (LGDSSYEFFC). Positions 234-448 (DAPLVASLSV…IEHNDNFRLP (215 aa)) constitute an FAD-binding FR-type domain. Residues Thr-322, Ala-356, 386–389 (RLYS), 404–406 (TVG), Tyr-410, and 419–422 (GGAS) each bind FAD. Residues 519–520 (SR), 525–529 (KVYVQ), and Asp-561 each bind NADP(+). Residue Tyr-599 coordinates FAD.

It belongs to the NADPH-dependent sulphite reductase flavoprotein subunit CysJ family. This sequence in the N-terminal section; belongs to the flavodoxin family. The protein in the C-terminal section; belongs to the flavoprotein pyridine nucleotide cytochrome reductase family. In terms of assembly, alpha(8)-beta(8). The alpha component is a flavoprotein, the beta component is a hemoprotein. Requires FAD as cofactor. The cofactor is FMN.

The catalysed reaction is hydrogen sulfide + 3 NADP(+) + 3 H2O = sulfite + 3 NADPH + 4 H(+). The protein operates within sulfur metabolism; hydrogen sulfide biosynthesis; hydrogen sulfide from sulfite (NADPH route): step 1/1. Component of the sulfite reductase complex that catalyzes the 6-electron reduction of sulfite to sulfide. This is one of several activities required for the biosynthesis of L-cysteine from sulfate. The flavoprotein component catalyzes the electron flow from NADPH -&gt; FAD -&gt; FMN to the hemoprotein component. The protein is Sulfite reductase [NADPH] flavoprotein alpha-component of Shigella flexneri serotype 5b (strain 8401).